The primary structure comprises 437 residues: Elongation factor 1-gamma (437 aa).

Position 2 is an N-acetylalanine (A2). Positions 2–87 (AAGTLYTYPE…YVSNEELRGS (86 aa)) constitute a GST N-terminal domain. In terms of domain architecture, GST C-terminal spans 88-216 (TPEAAAQVVQ…VKLCEKMAQF (129 aa)). N6-acetyllysine occurs at positions 147 and 212. Positions 221 to 254 (FAESQPKKDTPRKEKGSREEKQKPQTERKEEKKA) are enriched in basic and acidic residues. The disordered stretch occupies residues 221 to 268 (FAESQPKKDTPRKEKGSREEKQKPQTERKEEKKAAAPAPEEEMDECEQ). Residue K253 forms a Glycyl lysine isopeptide (Lys-Gly) (interchain with G-Cter in SUMO1) linkage. The region spanning 276–437 (AKDPFAHLPK…KAVNQGKIFK (162 aa)) is the EF-1-gamma C-terminal domain. K285 participates in a covalent cross-link: Glycyl lysine isopeptide (Lys-Gly) (interchain with G-Cter in SUMO2). Residue K401 is modified to N6-acetyllysine. K434 carries the N6-acetyllysine; alternate modification. K434 is subject to N6-malonyllysine; alternate.

As to quaternary structure, EF-1 is composed of four subunits: alpha, beta, delta, and gamma.

Its function is as follows. Probably plays a role in anchoring the complex to other cellular components. In Rattus norvegicus (Rat), this protein is Elongation factor 1-gamma (Eef1g).